The primary structure comprises 83 residues: Large ribosomal subunit protein uL23 (83 aa).

The protein belongs to the universal ribosomal protein uL23 family. In terms of assembly, part of the 50S ribosomal subunit. Contacts protein L29.

Functionally, binds to 23S rRNA. One of the proteins that surrounds the polypeptide exit tunnel on the outside of the ribosome. The protein is Large ribosomal subunit protein uL23 of Thermoplasma volcanium (strain ATCC 51530 / DSM 4299 / JCM 9571 / NBRC 15438 / GSS1).